Reading from the N-terminus, the 227-residue chain is Protein PhlB (227 aa).

The N-terminal stretch at 1-35 (MPEGRRLRRALAIALLALVAVTGLLMMAKEQQMGQ) is a signal peptide. ANK repeat units lie at residues 75–104 (RQVT…DPAA), 108–137 (DGNS…QMNV), 142–171 (TGAT…DTTL), and 175–204 (LGDT…MPGR).

Functionally, cell-protective protein that neutralizes the intracellular lysis capacity of phospholipase A1 through a direct interaction with the enzyme. In Serratia liquefaciens, this protein is Protein PhlB (phlB).